The sequence spans 251 residues: MKTLLILTILAMAITIGTANMQVDPSSQVQWPQQQPVPQPHQPFSQQPQQTFPQPQQTFPHQPQQQFPQPQQPQQQFLQPQQPFPQQPQQPYPQQPQQPFPQTQQPQQLFPQSQQPQQQFSQPQQQFPQPQQPQQSFPQQQPPFIQPSLQQQVNPCKNFLLQQCKPVSLVSSLWSMIWPQSDCQVMRQQCCQQLAQIPQQLQCAAIHTIIHSIIMQQEQQEQQQGMHILLPLYQQQQVGQGTLVQGQGIIQ.

The first 19 residues, 1–19, serve as a signal peptide directing secretion; the sequence is MKTLLILTILAMAITIGTA. The disordered stretch occupies residues 26–143; the sequence is SSQVQWPQQQ…QQSFPQQQPP (118 aa). Residues 42–81 show a composition bias toward low complexity; sequence QPFSQQPQQTFPQPQQTFPHQPQQQFPQPQQPQQQFLQPQ. The segment covering 82-99 has biased composition (pro residues); sequence QPFPQQPQQPYPQQPQQP. Low complexity predominate over residues 100–139; that stretch reads FPQTQQPQQLFPQSQQPQQQFSQPQQQFPQPQQPQQSFPQ.

It belongs to the gliadin/glutenin family.

Its function is as follows. Gliadin is the major seed storage protein in wheat. This is Gamma-gliadin from Triticum aestivum (Wheat).